Reading from the N-terminus, the 365-residue chain is Pectate trisaccharide-lyase (365 aa).

Residues 1–25 (MRFSRVVSLVLLLVFTAVLTGAVKA) form the signal peptide. The Ca(2+) site is built by Asp-142, Asp-164, and Asp-168. A PbH1 1 repeat occupies 149-171 (SHHIWIDHCTFVNGNDGAVDIKK). Arg-222 is an active-site residue. The PbH1 2 repeat unit spans residues 261-287 (GAKVHVEGNYFMGYGAVMAEAGIAFLP).

Belongs to the polysaccharide lyase 1 family. As to quaternary structure, homotetramer. It depends on Ca(2+) as a cofactor.

The protein localises to the secreted. The catalysed reaction is eliminative cleavage of unsaturated trigalacturonate as the major product from the reducing end of polygalacturonic acid/pectate.. Its function is as follows. Cleaves unsaturated trigalacturonate from pectin. Activity is highest towards polygalacturonic acid, activity on methylated pectins decreases with an increasing degree of methylation. The sequence is that of Pectate trisaccharide-lyase from Thermotoga sp. (strain RQ2).